We begin with the raw amino-acid sequence, 177 residues long: Large ribosomal subunit protein uL6 (177 aa).

Belongs to the universal ribosomal protein uL6 family. As to quaternary structure, part of the 50S ribosomal subunit.

Its function is as follows. This protein binds to the 23S rRNA, and is important in its secondary structure. It is located near the subunit interface in the base of the L7/L12 stalk, and near the tRNA binding site of the peptidyltransferase center. This chain is Large ribosomal subunit protein uL6, found in Dichelobacter nodosus (strain VCS1703A).